Here is a 101-residue protein sequence, read N- to C-terminus: Nucleoid-associated protein Cla_0113 (101 aa).

This sequence belongs to the YbaB/EbfC family. Homodimer.

It localises to the cytoplasm. It is found in the nucleoid. Binds to DNA and alters its conformation. May be involved in regulation of gene expression, nucleoid organization and DNA protection. In Campylobacter lari (strain RM2100 / D67 / ATCC BAA-1060), this protein is Nucleoid-associated protein Cla_0113.